Here is a 157-residue protein sequence, read N- to C-terminus: Large ribosomal subunit protein uL10 (157 aa).

It belongs to the universal ribosomal protein uL10 family. In terms of assembly, part of the ribosomal stalk of the 50S ribosomal subunit. The N-terminus interacts with L11 and the large rRNA to form the base of the stalk. The C-terminus forms an elongated spine to which L12 dimers bind in a sequential fashion forming a multimeric L10(L12)X complex.

Its function is as follows. Forms part of the ribosomal stalk, playing a central role in the interaction of the ribosome with GTP-bound translation factors. This chain is Large ribosomal subunit protein uL10, found in Campylobacter hominis (strain ATCC BAA-381 / DSM 21671 / CCUG 45161 / LMG 19568 / NCTC 13146 / CH001A).